Consider the following 283-residue polypeptide: Mau operon transcriptional activator (283 aa).

The region spanning 1-58 is the HTH lysR-type domain; that stretch reads MNWDDLRVVAAINRCGSFNRAAKMLNVEETTIARRLARLEGSLGCVLFQAVDGQRRPT. The H-T-H motif DNA-binding region spans 18 to 37; that stretch reads FNRAAKMLNVEETTIARRLA.

This sequence belongs to the LysR transcriptional regulatory family.

Functionally, transcriptional activator of the mau genes involved in methylamine metabolism. In Paracoccus denitrificans, this protein is Mau operon transcriptional activator (mauR).